A 130-amino-acid chain; its full sequence is D-ribose pyranase (130 aa).

The Proton donor role is filled by histidine 20. Residues aspartate 28, histidine 97, and 119 to 121 each bind substrate; that span reads YAN.

The protein belongs to the RbsD / FucU family. RbsD subfamily. As to quaternary structure, homodecamer.

Its subcellular location is the cytoplasm. The catalysed reaction is beta-D-ribopyranose = beta-D-ribofuranose. It participates in carbohydrate metabolism; D-ribose degradation; D-ribose 5-phosphate from beta-D-ribopyranose: step 1/2. Functionally, catalyzes the interconversion of beta-pyran and beta-furan forms of D-ribose. This Bacillus pumilus (strain SAFR-032) protein is D-ribose pyranase.